A 183-amino-acid chain; its full sequence is ADP-ribosylation factor-like protein 5 (183 aa).

Residues 27–34 (GLNAAGKT), 70–74 (DLGGQ), and 129–132 (NKQD) each bind GTP.

The protein belongs to the small GTPase superfamily. Arf family.

May bind and exchange GTP and GDP. This chain is ADP-ribosylation factor-like protein 5 (arl5), found in Dictyostelium discoideum (Social amoeba).